The following is a 101-amino-acid chain: Putative septation protein SpoVG (101 aa).

The segment at 82–101 is disordered; it reads ELKKGGAAPARATGTDPHED.

Belongs to the SpoVG family.

Functionally, could be involved in septation. This Anaeromyxobacter dehalogenans (strain 2CP-1 / ATCC BAA-258) protein is Putative septation protein SpoVG.